A 375-amino-acid polypeptide reads, in one-letter code: Outer membrane porin C (375 aa).

The signal sequence occupies residues 1-21 (MKVKVLSLLVPALLVAGAANA). Residues 22-33 (AEVYNKDGNKLD) lie on the Periplasmic side of the membrane. A beta stranded transmembrane segment spans residues 34–42 (LYGKVDGLH). Topologically, residues 43-53 (YFSDDKSVDGD) are extracellular. The chain crosses the membrane as a beta stranded span at residues 54-63 (QTYMRLGFKG). Topologically, residues 64–73 (ETQVTDQLTG) are periplasmic. Residues 74–84 (YGQWEYQIQGN) form a beta stranded membrane-spanning segment. Residues 85–91 (APESENN) are Extracellular-facing. Residues 92-101 (SWTRVAFAGL) form a beta stranded membrane-spanning segment. The Periplasmic segment spans residues 102–106 (KFQDI). A beta stranded transmembrane segment spans residues 107–115 (GSFDYGRNY). Residues 116-141 (GVVYDVTSWTDVLPEFGGDTYGSDNF) are Extracellular-facing. A beta stranded membrane pass occupies residues 142–154 (MQQRGNGFATYRN). The Periplasmic segment spans residues 155–163 (TDFFGLVDG). A beta stranded transmembrane segment spans residues 164-171 (LNFAVQYQ). Residues 172–204 (GQNGSVSGENDPDFTGHGITNNGRKALRQNGDG) lie on the Extracellular side of the membrane. A beta stranded membrane pass occupies residues 205-211 (VGGSITY). The Periplasmic portion of the chain corresponds to 212–215 (DYEG). The beta stranded transmembrane segment at 216-223 (FGVGAAVS) threads the bilayer. The Extracellular segment spans residues 224 to 245 (SSKRTDAQNTAAYIGNGDRAET). A beta stranded membrane pass occupies residues 246-252 (YTGGLKY). Residues 253-256 (DANN) are Periplasmic-facing. Residues 257 to 264 (IYLAAQYT) traverse the membrane as a beta stranded segment. At 265–273 (QTYNATRVG) the chain is on the extracellular side. Residues 274-290 (SLGWANKAQNFEAVAQY) traverse the membrane as a beta stranded segment. Residues 291-295 (QFDFG) lie on the Periplasmic side of the membrane. Residues 296-303 (LRPSVAYL) form a beta stranded membrane-spanning segment. At 304 to 326 (QSKGKNLGTIGTRNYDDEDILKY) the chain is on the extracellular side. The beta stranded transmembrane segment at 327-334 (VDVGATYY) threads the bilayer. The Periplasmic segment spans residues 335 to 338 (FNKN). A beta stranded membrane pass occupies residues 339–346 (MSTYVDYK). The Extracellular segment spans residues 347-366 (INLLDDNQFTRDAGINTDNI). The chain crosses the membrane as a beta stranded span at residues 367–374 (VALGLVYQ). Phe375 is a topological domain (periplasmic).

It belongs to the Gram-negative porin family. As to quaternary structure, homotrimer. Forms mixed heterotrimers with OmpF; other mixed heterotrimers are also probable.

It is found in the cell outer membrane. Forms pores that allow passive diffusion of small molecules across the outer membrane. In terms of biological role, (Microbial infection) Supports colicin E5 entry in the absence of its major receptor OmpF. Functionally, (Microbial infection) A mixed OmpC-OmpF heterotrimer is the outer membrane receptor for toxin CdiA-EC536. In Escherichia coli O6:K15:H31 (strain 536 / UPEC), this protein is Outer membrane porin C (ompC).